Reading from the N-terminus, the 576-residue chain is Putative SPbeta prophage-derived single-strand DNA-specific exonuclease YorK (576 aa).

At Y473 the chain carries Phosphotyrosine.

It belongs to the RecJ family.

Functionally, putative single-stranded-DNA-specific exonuclease. The chain is Putative SPbeta prophage-derived single-strand DNA-specific exonuclease YorK (yorK) from Bacillus subtilis (strain 168).